A 261-amino-acid polypeptide reads, in one-letter code: Thiazole synthase (261 aa).

Lys97 (schiff-base intermediate with DXP) is an active-site residue. Residues Gly158, 184–185 (AG), and 206–207 (AS) each bind 1-deoxy-D-xylulose 5-phosphate.

This sequence belongs to the ThiG family. In terms of assembly, homotetramer. Forms heterodimers with either ThiH or ThiS.

It localises to the cytoplasm. It carries out the reaction [ThiS sulfur-carrier protein]-C-terminal-Gly-aminoethanethioate + 2-iminoacetate + 1-deoxy-D-xylulose 5-phosphate = [ThiS sulfur-carrier protein]-C-terminal Gly-Gly + 2-[(2R,5Z)-2-carboxy-4-methylthiazol-5(2H)-ylidene]ethyl phosphate + 2 H2O + H(+). The protein operates within cofactor biosynthesis; thiamine diphosphate biosynthesis. Catalyzes the rearrangement of 1-deoxy-D-xylulose 5-phosphate (DXP) to produce the thiazole phosphate moiety of thiamine. Sulfur is provided by the thiocarboxylate moiety of the carrier protein ThiS. In vitro, sulfur can be provided by H(2)S. This is Thiazole synthase from Corynebacterium diphtheriae (strain ATCC 700971 / NCTC 13129 / Biotype gravis).